A 323-amino-acid chain; its full sequence is o-succinylbenzoate synthase (323 aa).

Lys134 (proton donor) is an active-site residue. Residues Asp162, Glu191, and Asp214 each coordinate Mg(2+). Lys236 acts as the Proton acceptor in catalysis.

It belongs to the mandelate racemase/muconate lactonizing enzyme family. MenC type 1 subfamily. It depends on a divalent metal cation as a cofactor.

The enzyme catalyses (1R,6R)-6-hydroxy-2-succinyl-cyclohexa-2,4-diene-1-carboxylate = 2-succinylbenzoate + H2O. The protein operates within quinol/quinone metabolism; 1,4-dihydroxy-2-naphthoate biosynthesis; 1,4-dihydroxy-2-naphthoate from chorismate: step 4/7. It functions in the pathway quinol/quinone metabolism; menaquinone biosynthesis. Functionally, converts 2-succinyl-6-hydroxy-2,4-cyclohexadiene-1-carboxylate (SHCHC) to 2-succinylbenzoate (OSB). The chain is o-succinylbenzoate synthase from Yersinia pseudotuberculosis serotype I (strain IP32953).